The chain runs to 323 residues: Deaminated glutathione amidase (323 aa).

A mitochondrion-targeting transit peptide spans 1 to 33 (MLGFITRPPHQLLCTGYRLLRTPVLCTQPRPRT). The CN hydrolase domain occupies 42 to 294 (LPLVAVCQVT…PGLCLARIDL (253 aa)). Residue Glu82 is the Proton acceptor of the active site. Lys157 functions as the Proton donor in the catalytic mechanism. The active-site Nucleophile is the Cys199.

Belongs to the carbon-nitrogen hydrolase superfamily. NIT1/NIT2 family. As to expression, expressed in most tissues with higher expression in adult liver and kidney as well as in fetal adrenal gland and skeletal muscle.

It localises to the mitochondrion. Its subcellular location is the cytoplasm. It catalyses the reaction N-(4-oxoglutaryl)-L-cysteinylglycine + H2O = L-cysteinylglycine + 2-oxoglutarate. The enzyme catalyses N-(4-carboxy-4-oxobutanoyl)-L-ethylglycylglycine + H2O = N-(2-aminobutanoyl)glycine + 2-oxoglutarate. In terms of biological role, catalyzes the hydrolysis of the amide bond in N-(4-oxoglutarate)-L-cysteinylglycine (deaminated glutathione), a metabolite repair reaction to dispose of the harmful deaminated glutathione. Possesses amidase activity toward deaminated ophthalmate in vitro. Plays a role in cell growth and apoptosis: loss of expression promotes cell growth, resistance to DNA damage stress and increased incidence to NMBA-induced tumors. Has tumor suppressor properties that enhances the apoptotic responsiveness in cancer cells; this effect is additive to the tumor suppressor activity of FHIT. It is also a negative regulator of primary T-cells. This chain is Deaminated glutathione amidase, found in Mus musculus (Mouse).